The sequence spans 85 residues: Large ribosomal subunit protein bL27 (85 aa).

The disordered stretch occupies residues 1–20 (MAHKKAGGSTRNGRDSEAKR).

Belongs to the bacterial ribosomal protein bL27 family.

The chain is Large ribosomal subunit protein bL27 from Escherichia coli O139:H28 (strain E24377A / ETEC).